The chain runs to 85 residues: Large ribosomal subunit protein bL27 (85 aa).

The interval 1–22 (MAHKKGGGSSRNGRDSNAQRRG) is disordered.

Belongs to the bacterial ribosomal protein bL27 family.

The sequence is that of Large ribosomal subunit protein bL27 from Sorangium cellulosum (strain So ce56) (Polyangium cellulosum (strain So ce56)).